The sequence spans 139 residues: MKHYELLFILKPTLTEEEVKAKVDFVKEVITKNGGEIATVIEMGTRKLAYTIKKYERGTYFVIYYKAPPALLAELTRNVRITEDIIRFLSVKYENKREIAAWERLCKGIKQTIKKEPREPRAPREPRVEKVDEQTFTEE.

Over residues Lys114–Glu133 the composition is skewed to basic and acidic residues. The interval Lys114–Glu139 is disordered.

The protein belongs to the bacterial ribosomal protein bS6 family.

In terms of biological role, binds together with bS18 to 16S ribosomal RNA. The polypeptide is Small ribosomal subunit protein bS6 (Campylobacter concisus (strain 13826)).